The primary structure comprises 411 residues: Coiled-coil domain-containing protein 159 (411 aa).

The tract at residues 84–113 (EQAGKSGAWEKEWDSEPQPHEGTPCSSSDV) is disordered. Over residues 91-102 (AWEKEWDSEPQP) the composition is skewed to basic and acidic residues. Residues 269 to 305 (EELELVREEVTFIYQKLQDQEDEISENLLNIQKMQKT) are a coiled coil. A disordered region spans residues 372 to 411 (RASSLRGQKGHQCKSSQCPSWDSDSDWERPFSKSGSYPPA). The span at 384 to 393 (CKSSQCPSWD) shows a compositional bias: polar residues.

As to quaternary structure, interacts with DYNLT2. Interacts with GGNBP1. Interacts with OSBP2. In terms of tissue distribution, expressed in spermatids but undetectable in the spermatozoon (at protein level). Highly expressed in the testis (at protein level).

In terms of biological role, functions during spermatid development; may participate in the centrosome reduction procedure of spermatids and is required for the formation of the connecting piece/sperm head-tail coupling apparatus (HTCA) and the correct and tight attachment of the flagellum to the nuclear envelope. This Mus musculus (Mouse) protein is Coiled-coil domain-containing protein 159 (Ccdc159).